A 142-amino-acid chain; its full sequence is Putative pre-16S rRNA nuclease (142 aa).

Belongs to the YqgF nuclease family.

It localises to the cytoplasm. Its function is as follows. Could be a nuclease involved in processing of the 5'-end of pre-16S rRNA. In Nitratidesulfovibrio vulgaris (strain DSM 19637 / Miyazaki F) (Desulfovibrio vulgaris), this protein is Putative pre-16S rRNA nuclease.